We begin with the raw amino-acid sequence, 157 residues long: Pyruvoyl-dependent arginine decarboxylase 1 (157 aa).

Position 41 is a pyruvic acid (Ser) (serine 41).

The protein belongs to the PdaD family. It depends on pyruvate as a cofactor.

It catalyses the reaction L-arginine + H(+) = agmatine + CO2. This Archaeoglobus fulgidus (strain ATCC 49558 / DSM 4304 / JCM 9628 / NBRC 100126 / VC-16) protein is Pyruvoyl-dependent arginine decarboxylase 1 (pdaD1).